The chain runs to 326 residues: Ribosome biogenesis protein BRX1 homolog (326 aa).

Residues 1 to 17 (MVKPSKILEKIKKRTEP) are compositionally biased toward basic and acidic residues. The tract at residues 1–66 (MVKPSKILEK…EENKNIEENK (66 aa)) is disordered. The segment covering 22-57 (VVEEESDEEIIEQEGSEEEEEIVEEESEEEEEEVEE) has biased composition (acidic residues). Positions 75-268 (KRVLFTSTRG…IDKIFSDGFG (194 aa)) constitute a Brix domain.

The protein belongs to the BRX1 family.

The protein localises to the nucleus. It is found in the nucleolus. Its function is as follows. Required for biogenesis of the 60S ribosomal subunit. The chain is Ribosome biogenesis protein BRX1 homolog (bxdc2) from Dictyostelium discoideum (Social amoeba).